The primary structure comprises 146 residues: Large ribosomal subunit protein uL23m (146 aa).

The tract at residues 108-146 is disordered; that stretch reads PDLFPEKEPTSPDPLEEELPQQRQSSDPRCPGIPSWFGL.

Belongs to the universal ribosomal protein uL23 family. As to quaternary structure, component of the mitochondrial ribosome large subunit (39S) which comprises a 16S rRNA and about 50 distinct proteins.

The protein localises to the mitochondrion. This Rattus norvegicus (Rat) protein is Large ribosomal subunit protein uL23m (Mrpl23).